The following is a 52-amino-acid chain: Large ribosomal subunit protein bL33 (52 aa).

This sequence belongs to the bacterial ribosomal protein bL33 family.

The protein is Large ribosomal subunit protein bL33 of Anaeromyxobacter sp. (strain Fw109-5).